The primary structure comprises 464 residues: Trigger factor (464 aa).

In terms of domain architecture, PPIase FKBP-type spans 166 to 245 (GDFLTIDITA…VKAVKERELP (80 aa)). The interval 426–464 (FVRPGGEEEAPAAEVTEADTAEGEATEVPAEDEKAEAKA) is disordered. The segment covering 432–455 (EEEAPAAEVTEADTAEGEATEVPA) has biased composition (acidic residues).

This sequence belongs to the FKBP-type PPIase family. Tig subfamily.

The protein resides in the cytoplasm. The catalysed reaction is [protein]-peptidylproline (omega=180) = [protein]-peptidylproline (omega=0). Its function is as follows. Involved in protein export. Acts as a chaperone by maintaining the newly synthesized protein in an open conformation. Functions as a peptidyl-prolyl cis-trans isomerase. In Pseudarthrobacter chlorophenolicus (strain ATCC 700700 / DSM 12829 / CIP 107037 / JCM 12360 / KCTC 9906 / NCIMB 13794 / A6) (Arthrobacter chlorophenolicus), this protein is Trigger factor.